The following is a 371-amino-acid chain: Phospho-N-acetylmuramoyl-pentapeptide-transferase (371 aa).

The next 11 helical transmembrane spans lie at 21–41 (NHIL…DFYY), 46–66 (LTIP…IGIP), 92–112 (PTMG…ILYF), 119–139 (IILT…IDDF), 156–176 (ILLQ…NNLI), 182–202 (IANK…FVLL), 216–236 (GLLS…ILIE), 241–261 (NSTL…FLFL), 268–288 (LFMG…IALI), 296–316 (LIMG…VSIF), and 349–369 (IVSS…IFLI).

It belongs to the glycosyltransferase 4 family. MraY subfamily. It depends on Mg(2+) as a cofactor.

The protein resides in the cell inner membrane. It carries out the reaction UDP-N-acetyl-alpha-D-muramoyl-L-alanyl-gamma-D-glutamyl-meso-2,6-diaminopimeloyl-D-alanyl-D-alanine + di-trans,octa-cis-undecaprenyl phosphate = di-trans,octa-cis-undecaprenyl diphospho-N-acetyl-alpha-D-muramoyl-L-alanyl-D-glutamyl-meso-2,6-diaminopimeloyl-D-alanyl-D-alanine + UMP. Its pathway is cell wall biogenesis; peptidoglycan biosynthesis. Functionally, catalyzes the initial step of the lipid cycle reactions in the biosynthesis of the cell wall peptidoglycan: transfers peptidoglycan precursor phospho-MurNAc-pentapeptide from UDP-MurNAc-pentapeptide onto the lipid carrier undecaprenyl phosphate, yielding undecaprenyl-pyrophosphoryl-MurNAc-pentapeptide, known as lipid I. The chain is Phospho-N-acetylmuramoyl-pentapeptide-transferase from Prochlorococcus marinus (strain NATL2A).